Consider the following 391-residue polypeptide: MSLSKETEVIFDEHRGVDYDSANPPLYDSSTFHQKVLGGNAKFDYARSGNPNRQLLEEKLAKLEGGQYAFAYASGIAAISAVLLTLKANDHVILPDDVYGGTFRLTEQILNRFDIQFTTVNATQPKEIERAIQPNTKLIYVETPSNPCFKITDIRAVAAIAKRHHLLLAVDNTFMTPLGQSPLALGADIVVHSATKFLGGHSDIIAGAAITNRKDVADALYLLQNGTGTALSAHDSWTLAKHLKTLPVRFKQSTSNAEKLVAFLKEREEIAEVYYPGNSSLHLSQANSGGAVIGFRLKDETKTQDFVDALTLPLVSVSLGGVETILSHPATMSHAAVPEDVRNERGITFGLFRLSVGLEQPQELIADLNYALKEAFNESIIESITEQRFSS.

Position 196 is an N6-(pyridoxal phosphate)lysine (K196).

Belongs to the trans-sulfuration enzymes family. Homotetramer. It depends on pyridoxal 5'-phosphate as a cofactor.

The catalysed reaction is L,L-cystathionine + H2O = L-homocysteine + pyruvate + NH4(+). It catalyses the reaction an S-substituted L-cysteine + H2O = a thiol + pyruvate + NH4(+). It participates in amino-acid biosynthesis; L-methionine biosynthesis via de novo pathway; L-homocysteine from L-cystathionine: step 1/1. With respect to regulation, cystathionine beta-lyase activity is inhibited by sweat components such as glycine, serine and ammonium sulfate. Inhibited by cystathionine at a concentration higher than 6 mM. In terms of biological role, catalyzes the transformation of cystathionine into homocysteine. Can also catalyze, at low levels, the conversion of cystathionine into methionine and the conversion of methionine into methanethiol. The chain is Cystathionine beta-lyase MetC from Staphylococcus haemolyticus (strain JCSC1435).